The sequence spans 603 residues: Elongation factor 4 (603 aa).

In terms of domain architecture, tr-type G spans 7–189 (SRIRNFCIIA…SIVHLVPPPS (183 aa)). GTP is bound by residues 19–24 (DHGKST) and 136–139 (NKID).

Belongs to the TRAFAC class translation factor GTPase superfamily. Classic translation factor GTPase family. LepA subfamily.

It is found in the cell inner membrane. It catalyses the reaction GTP + H2O = GDP + phosphate + H(+). In terms of biological role, required for accurate and efficient protein synthesis under certain stress conditions. May act as a fidelity factor of the translation reaction, by catalyzing a one-codon backward translocation of tRNAs on improperly translocated ribosomes. Back-translocation proceeds from a post-translocation (POST) complex to a pre-translocation (PRE) complex, thus giving elongation factor G a second chance to translocate the tRNAs correctly. Binds to ribosomes in a GTP-dependent manner. The protein is Elongation factor 4 of Crocosphaera subtropica (strain ATCC 51142 / BH68) (Cyanothece sp. (strain ATCC 51142)).